The chain runs to 193 residues: MCVFFCVCIFLCVYFFVCIFLCVFFCVCIFLCVFFCVYFFVCVFFCVCFFVCVFFVCVYAFAHVAVCSVRPRRHVCACSRAYLHHRNGSGVYKKVIRPAGRSAHPPVGRFYTRPLFSLSRATCGPSSGTSAPRPRWRSLTLGGAHGPRGRSLFPPASPRLSLCGSAFCLSFSLARAIVFSLSPGSGARLHLRL.

3 consecutive transmembrane segments (helical) span residues 15–35 (FFVC…CVFF), 36–56 (CVYF…VFFV), and 160–180 (LSLC…IVFS).

Its subcellular location is the host membrane. This Homo sapiens (Human) protein is Protein B4 (B4).